Reading from the N-terminus, the 322-residue chain is CPX chromosomal region candidate gene 1 protein homolog (322 aa).

Composition is skewed to polar residues over residues 1–23 (MTSS…NETP) and 37–78 (TNIS…TQND). The tract at residues 1 to 83 (MTSSNQGNDP…MTQNDPPDEE (83 aa)) is disordered.

In Mus musculus (Mouse), this protein is CPX chromosomal region candidate gene 1 protein homolog (Cpxcr1).